Consider the following 440-residue polypeptide: SET domain-containing protein 4 (440 aa).

Residues 1–16 (MQKGKGRTSRIRRRKL) show a composition bias toward basic residues. The interval 1 to 24 (MQKGKGRTSRIRRRKLCGSSESRG) is disordered. One can recognise an SET domain in the interval 48–273 (SNLAPACFPG…KHEEVFICYG (226 aa)). Tyrosine 272 serves as a coordination point for S-adenosyl-L-methionine.

This sequence belongs to the class V-like SAM-binding methyltransferase superfamily. SETD4 family. In terms of assembly, forms a ternary complex with TBK1 and ZNF268; the interaction with TBK1 is ZNF268-dependent and leads to TBK1 monomethylation.

It localises to the cytoplasm. It is found in the cytosol. The protein resides in the nucleus. It carries out the reaction L-lysyl(4)-[histone H3] + S-adenosyl-L-methionine = N(6)-methyl-L-lysyl(4)-[histone H3] + S-adenosyl-L-homocysteine + H(+). It catalyses the reaction N(6)-methyl-L-lysyl(4)-[histone H3] + S-adenosyl-L-methionine = N(6),N(6)-dimethyl-L-lysyl(4)-[histone H3] + S-adenosyl-L-homocysteine + H(+). The enzyme catalyses L-lysyl(20)-[histone H4] + S-adenosyl-L-methionine = N(6)-methyl-L-lysyl(20)-[histone H4] + S-adenosyl-L-homocysteine + H(+). The catalysed reaction is N(6)-methyl-L-lysyl(20)-[histone H4] + S-adenosyl-L-methionine = N(6),N(6)-dimethyl-L-lysyl(20)-[histone H4] + S-adenosyl-L-homocysteine + H(+). It carries out the reaction N(6),N(6)-dimethyl-L-lysyl(20)-[histone H4] + S-adenosyl-L-methionine = N(6),N(6),N(6)-trimethyl-L-lysyl(20)-[histone H4] + S-adenosyl-L-homocysteine + H(+). It catalyses the reaction L-lysyl-[protein] + S-adenosyl-L-methionine = N(6)-methyl-L-lysyl-[protein] + S-adenosyl-L-homocysteine + H(+). Functionally, protein-lysine N-methyltransferase that methylates both histones and non-histone proteins. Via its catalytic activity, regulates many processes, including cell proliferation, cell differentiation, inflammatory response and apoptosis. Regulates the inflammatory response by mediating mono- and dimethylation of 'Lys-4' of histone H3 (H3K4me1 and H3K4me2, respectively), leading to activate the transcription of pro-inflammatory cytokines IL6 and TNF-alpha. Through the catalysis of TBK1 monomethylation, may regulate virus-induced interferon signaling. TBK1 monomethylation enhances its interaction with MAVS, STING and IRF3, hence promoting antiviral interferon signaling. Also involved in the regulation of stem cell quiescence by catalyzing the trimethylation of 'Lys-20' of histone H4 (H4K20me3), thereby promoting heterochromatin formation. In the brain, epigenetically controls quiescence of neural stem cells for sustaining a protected neural stem cell population and maintaining a stem cell reservoir for neurogenesis. Involved in proliferation, migration, paracrine and myogenic differentiation of bone marrow mesenchymal stem cells (BMSCs). Through the catalysis of XRCC5/Ku70 trimethylation, regulates BAX-mediated apoptosis. SETD4-catalyzed XRCC5 methylation results in XRCC5 translocation to the cytoplasm, where it interacts with BAX, sequestering it from the mitochondria, hence preventing BAX-mediated apoptosis. This chain is SET domain-containing protein 4, found in Homo sapiens (Human).